A 176-amino-acid chain; its full sequence is Flavodoxin 1 (176 aa).

A Flavodoxin-like domain is found at 4 to 165 (TGIFFGSDTG…RVEKWVKQVS (162 aa)).

This sequence belongs to the flavodoxin family. FMN serves as cofactor.

Low-potential electron donor to a number of redox enzymes (Potential). Involved in the reactivation of inactive cob(II)alamin in methionine synthase. The protein is Flavodoxin 1 (fldA) of Salmonella typhimurium (strain LT2 / SGSC1412 / ATCC 700720).